The sequence spans 359 residues: Adenosine 3'-phospho 5'-phosphosulfate transporter 1 (359 aa).

Transmembrane regions (helical) follow at residues 26 to 46, 68 to 88, 157 to 177, 184 to 204, 228 to 248, 254 to 276, and 300 to 320; these read NMKLALATGGIMGSFLLYGIL, STFLVLSNRVFAALMAIVIVL, YSIALTITTGCMIFFLTGKIS, TSYGIILMALYMFFDSFTSTF, SIISVFILILNGRLFPAIEFI, VFFDSTMLSASAGLGQMVIYYTI, and TLIYLHPLSNTQWIGALLVFG. Positions 332-359 are disordered; sequence KKHGGHSHGGSNAATTTTPSNNSNNTEK. Positions 340 to 359 are enriched in low complexity; sequence GGSNAATTTTPSNNSNNTEK.

This sequence belongs to the nucleotide-sugar transporter family. SLC35B subfamily.

It localises to the golgi apparatus membrane. The enzyme catalyses 3'-phosphoadenylyl sulfate(in) + adenosine 3',5'-bisphosphate(out) = 3'-phosphoadenylyl sulfate(out) + adenosine 3',5'-bisphosphate(in). Functionally, probably functions as a 3'-phosphoadenylyl sulfate:adenosine 3',5'-bisphosphate antiporter at the Golgi membranes. Mediates the transport from the cytosol into the lumen of the Golgi of 3'-phosphoadenylyl sulfate/adenosine 3'-phospho 5'-phosphosulfate (PAPS), a universal sulfuryl donor for sulfation events that take place in that compartment. The sequence is that of Adenosine 3'-phospho 5'-phosphosulfate transporter 1 (slc35b2) from Dictyostelium discoideum (Social amoeba).